The sequence spans 443 residues: Glucose-6-phosphate isomerase (443 aa).

The active-site Proton donor is the Glu-285. Active-site residues include His-306 and Lys-420.

It belongs to the GPI family.

Its subcellular location is the cytoplasm. It catalyses the reaction alpha-D-glucose 6-phosphate = beta-D-fructose 6-phosphate. Its pathway is carbohydrate biosynthesis; gluconeogenesis. It participates in carbohydrate degradation; glycolysis; D-glyceraldehyde 3-phosphate and glycerone phosphate from D-glucose: step 2/4. In terms of biological role, catalyzes the reversible isomerization of glucose-6-phosphate to fructose-6-phosphate. This chain is Glucose-6-phosphate isomerase, found in Staphylococcus aureus (strain bovine RF122 / ET3-1).